A 248-amino-acid chain; its full sequence is Pyridoxine 5'-phosphate synthase (248 aa).

Position 10 (N10) interacts with 3-amino-2-oxopropyl phosphate. 12–13 contributes to the 1-deoxy-D-xylulose 5-phosphate binding site; it reads DH. Residue R21 participates in 3-amino-2-oxopropyl phosphate binding. H46 serves as the catalytic Proton acceptor. 1-deoxy-D-xylulose 5-phosphate is bound by residues R48 and H53. E73 serves as the catalytic Proton acceptor. T103 provides a ligand contact to 1-deoxy-D-xylulose 5-phosphate. H194 serves as the catalytic Proton donor. Residues G195 and 216-217 each bind 3-amino-2-oxopropyl phosphate; that span reads GH.

This sequence belongs to the PNP synthase family. Homooctamer; tetramer of dimers.

It localises to the cytoplasm. It carries out the reaction 3-amino-2-oxopropyl phosphate + 1-deoxy-D-xylulose 5-phosphate = pyridoxine 5'-phosphate + phosphate + 2 H2O + H(+). It functions in the pathway cofactor biosynthesis; pyridoxine 5'-phosphate biosynthesis; pyridoxine 5'-phosphate from D-erythrose 4-phosphate: step 5/5. Functionally, catalyzes the complicated ring closure reaction between the two acyclic compounds 1-deoxy-D-xylulose-5-phosphate (DXP) and 3-amino-2-oxopropyl phosphate (1-amino-acetone-3-phosphate or AAP) to form pyridoxine 5'-phosphate (PNP) and inorganic phosphate. In Legionella pneumophila (strain Corby), this protein is Pyridoxine 5'-phosphate synthase.